The chain runs to 121 residues: Nitrogenase-stabilizing/protective protein NifW (121 aa).

This sequence belongs to the NifW family. Homotrimer; associates with NifD.

Functionally, may protect the nitrogenase Fe-Mo protein from oxidative damage. This chain is Nitrogenase-stabilizing/protective protein NifW, found in Synechococcus sp. (strain JA-2-3B'a(2-13)) (Cyanobacteria bacterium Yellowstone B-Prime).